The sequence spans 405 residues: Pleckstrin homology-like domain family A member 1 (405 aa).

2 stretches are compositionally biased toward basic and acidic residues: residues 1-11 (MRRTPAAERLS) and 54-63 (RSPEDGREQP). Disordered regions lie at residues 1-67 (MRRT…AHGS), 189-217 (QLQQ…VASL), and 293-405 (QQHL…SNSA). In terms of domain architecture, PH spans 153–277 (ALKEGVLEKR…AEITLQMVQY (125 aa)). The span at 189–202 (QLQQQQQQQQPGQG) shows a compositional bias: low complexity. Over residues 204 to 213 (AEPSQPSGPT) the composition is skewed to polar residues. Low complexity predominate over residues 294 to 309 (QHLVQQQPPQTQQIQP). The 16 X 2 AA repeats of P-Q stretch occupies residues 309-344 (PQPQPQIQPQPQPQIQPQPQPQPQPQPQPQPQPQPQ). The segment covering 310–342 (QPQPQIQPQPQPQIQPQPQPQPQPQPQPQPQPQ) has biased composition (pro residues). The span at 350-376 (PHPHPHPYSHPHQHPHPHPHPHPHPHP) shows a compositional bias: basic residues. The 11 X 2 AA repeats of P-H stretch occupies residues 354-377 (PHPYSHPHQHPHPHPHPHPHPHPH). Positions 378 to 389 (PYQLQHAHQPLH) are enriched in low complexity.

In terms of assembly, interacts with RPL14, EIF3S7 and PABPC4. As to expression, widely expressed with very high levels in adult liver and high levels in adult lung. According to PubMed:10428057 expressed at low levels in liver. Expressed at increased levels in atherosclerotic lesions observed in hyperhomocysteinema.

Its subcellular location is the cytoplasm. It is found in the cytoplasmic vesicle. The protein localises to the nucleus. It localises to the nucleolus. Functionally, seems to be involved in regulation of apoptosis. May be involved in detachment-mediated programmed cell death. May mediate apoptosis during neuronal development. May be involved in regulation of anti-apoptotic effects of IGF1. Required for TCR-induced apoptosis and expression of TNFRSF6/FAS in a T-cell hybridoma cell line. May be involved in translational regulation. The polypeptide is Pleckstrin homology-like domain family A member 1 (Phlda1) (Mus musculus (Mouse)).